Here is an 824-residue protein sequence, read N- to C-terminus: Glycerol-3-phosphate acyltransferase (824 aa).

The short motif at 302-307 (CHRSHM) is the HXXXXD motif element.

The protein belongs to the GPAT/DAPAT family.

It localises to the cell inner membrane. It carries out the reaction sn-glycerol 3-phosphate + an acyl-CoA = a 1-acyl-sn-glycero-3-phosphate + CoA. It participates in phospholipid metabolism; CDP-diacylglycerol biosynthesis; CDP-diacylglycerol from sn-glycerol 3-phosphate: step 1/3. This chain is Glycerol-3-phosphate acyltransferase, found in Actinobacillus pleuropneumoniae serotype 3 (strain JL03).